Here is a 264-residue protein sequence, read N- to C-terminus: Teichoic acids export ATP-binding protein TagH (264 aa).

The 220-residue stretch at 24 to 243 folds into the ABC transporter domain; it reads IKDALIPKNK…YEQFLKDFKK (220 aa). Position 57–64 (57–64) interacts with ATP; the sequence is GINGSGKS.

It belongs to the ABC transporter superfamily. Teichoic acids exporter (TC 3.A.1.104.1) family. The complex is composed of two ATP-binding proteins (TagH) and two transmembrane proteins (TagG).

The protein resides in the cell membrane. The enzyme catalyses ATP + H2O + teichoic acidSide 1 = ADP + phosphate + teichoic acidSide 2.. Part of the ABC transporter complex TagGH involved in teichoic acids export. Responsible for energy coupling to the transport system. This chain is Teichoic acids export ATP-binding protein TagH, found in Staphylococcus haemolyticus (strain JCSC1435).